A 347-amino-acid polypeptide reads, in one-letter code: GMP reductase (347 aa).

108-131 contacts NADP(+); that stretch reads ADFEKTKQILDLNPALNFVCIDVA. K(+) contacts are provided by Gly-181 and Gly-183. The Thioimidate intermediate role is filled by Cys-186. Residue 216–239 participates in NADP(+) binding; that stretch reads IVSDGGCTTPGDVAKAFGGGADFV.

Belongs to the IMPDH/GMPR family. GuaC type 1 subfamily. Homotetramer.

It carries out the reaction IMP + NH4(+) + NADP(+) = GMP + NADPH + 2 H(+). In terms of biological role, catalyzes the irreversible NADPH-dependent deamination of GMP to IMP. It functions in the conversion of nucleobase, nucleoside and nucleotide derivatives of G to A nucleotides, and in maintaining the intracellular balance of A and G nucleotides. This Escherichia coli O139:H28 (strain E24377A / ETEC) protein is GMP reductase.